An 83-amino-acid chain; its full sequence is Small ribosomal subunit protein uS17 (83 aa).

This sequence belongs to the universal ribosomal protein uS17 family. In terms of assembly, part of the 30S ribosomal subunit.

In terms of biological role, one of the primary rRNA binding proteins, it binds specifically to the 5'-end of 16S ribosomal RNA. The sequence is that of Small ribosomal subunit protein uS17 from Chlamydia muridarum (strain MoPn / Nigg).